Consider the following 237-residue polypeptide: Endonuclease V (237 aa).

The Mg(2+) site is built by aspartate 46 and aspartate 114.

This sequence belongs to the endonuclease V family. Mg(2+) serves as cofactor.

The protein resides in the cytoplasm. The catalysed reaction is Endonucleolytic cleavage at apurinic or apyrimidinic sites to products with a 5'-phosphate.. Functionally, DNA repair enzyme involved in the repair of deaminated bases. Selectively cleaves double-stranded DNA at the second phosphodiester bond 3' to a deoxyinosine leaving behind the intact lesion on the nicked DNA. This Xanthomonas axonopodis pv. citri (strain 306) protein is Endonuclease V.